Here is a 209-residue protein sequence, read N- to C-terminus: Germin-like protein (209 aa).

An N-terminal signal peptide occupies residues methionine 1 to glycine 18. Residues cysteine 24 and cysteine 39 are joined by a disulfide bond. The 147-residue stretch at serine 53–lysine 199 folds into the Cupin type-1 domain. Asparagine 60 is a glycosylation site (N-linked (GlcNAc...) asparagine). Positions 101, 103, 108, and 147 each coordinate Mn(2+).

The protein resides in the secreted. It is found in the extracellular space. Its subcellular location is the apoplast. Functionally, has antibacterial activity against B.subtilis (MIC=5 ug), B.cereus (MIC=50 ug), A.hydrophila (MIC=2.5 ug), S.marcescens(MIC=10 ug), S.enterica (MIC=10 ug), P.entomophila (MIC=2.5 ug) and P.rhodesiae (MIC=10 ug). Has antifungal activity against F.solani KACC 40384 and F.oxysporum KACC 40032. Probably has no oxalate oxidase activity even if the active site is conserved. The polypeptide is Germin-like protein (Morus alba (White mulberry)).